Here is a 369-residue protein sequence, read N- to C-terminus: Peptide chain release factor 2 (369 aa).

N5-methylglutamine is present on Q250.

It belongs to the prokaryotic/mitochondrial release factor family. Methylated by PrmC. Methylation increases the termination efficiency of RF2.

It localises to the cytoplasm. Its function is as follows. Peptide chain release factor 2 directs the termination of translation in response to the peptide chain termination codons UGA and UAA. In Rickettsia typhi (strain ATCC VR-144 / Wilmington), this protein is Peptide chain release factor 2 (prfB).